The following is a 346-amino-acid chain: MESTLGAGIVIAEALQNQLAWLENVWLWITFLGDPKILFLFYFPAAYYASRRVGIAVLWISLITEWLNLIFKWFLFGDRPFWWVHESGYYSQAPAQVHQFPSSCETGPGSPSGHCMITGAALWPIMTALSSQVATRARSRWVRVMPSLAYCTFLLAVGLSRIFILAHFPHQVLAGLITGAVLGWLMTPRVPMERELSFYGLTALALMLGTSLIYWTLFTLGLDLSWSISLAFKWCERPEWIHVDSRPFASLSRDSGAALGLGIALHSPCYAQVRRAQLGNGQKIACLVLAMGLLGPLDWLGHPPQISLFYIFNFLKYTLWPCLVLALVPWAVHMFSAQEAPPIHSS.

Topologically, residues 1–24 (MESTLGAGIVIAEALQNQLAWLEN) are lumenal. A helical membrane pass occupies residues 25 to 45 (VWLWITFLGDPKILFLFYFPA). Residues 46-54 (AYYASRRVG) are Cytoplasmic-facing. Residues 55–75 (IAVLWISLITEWLNLIFKWFL) form a helical membrane-spanning segment. The Lumenal portion of the chain corresponds to 76–114 (FGDRPFWWVHESGYYSQAPAQVHQFPSSCETGPGSPSGH). Residue Arg79 coordinates substrate. His114 acts as the Proton donor in catalysis. A helical transmembrane segment spans residues 115 to 135 (CMITGAALWPIMTALSSQVAT). The Cytoplasmic segment spans residues 136–146 (RARSRWVRVMP). The helical transmembrane segment at 147–164 (SLAYCTFLLAVGLSRIFI) threads the bilayer. A substrate-binding site is contributed by Arg161. Over 165 to 169 (LAHFP) the chain is Lumenal. His167 acts as the Nucleophile in catalysis. A helical membrane pass occupies residues 170-186 (HQVLAGLITGAVLGWLM). At 187–197 (TPRVPMERELS) the chain is on the cytoplasmic side. A helical transmembrane segment spans residues 198-218 (FYGLTALALMLGTSLIYWTLF). At 219 to 254 (TLGLDLSWSISLAFKWCERPEWIHVDSRPFASLSRD) the chain is on the lumenal side. Residues 255 to 273 (SGAALGLGIALHSPCYAQV) traverse the membrane as a helical segment. Over 274 to 283 (RRAQLGNGQK) the chain is Cytoplasmic. Residues 284 to 304 (IACLVLAMGLLGPLDWLGHPP) traverse the membrane as a helical segment. The Lumenal segment spans residues 305–307 (QIS). The helical transmembrane segment at 308 to 328 (LFYIFNFLKYTLWPCLVLALV) threads the bilayer. Over 329 to 346 (PWAVHMFSAQEAPPIHSS) the chain is Cytoplasmic.

It belongs to the glucose-6-phosphatase family. In terms of tissue distribution, ubiquitously expressed. Highly expressed in skeletal muscle, at intermediate levels in heart, brain, placenta, kidney, colon, thymus, spleen and pancreas. Also detected in testis, prostate, ovary, liver, lung, small intestine and peripheral blood lymphocytes.

It localises to the endoplasmic reticulum membrane. It catalyses the reaction D-glucose 6-phosphate + H2O = D-glucose + phosphate. It participates in carbohydrate biosynthesis; gluconeogenesis. Inhibited by vanadate. Its function is as follows. Hydrolyzes glucose-6-phosphate to glucose in the endoplasmic reticulum. May form with the glucose-6-phosphate transporter (SLC37A4/G6PT) a ubiquitously expressed complex responsible for glucose production through glycogenolysis and gluconeogenesis. Probably required for normal neutrophil function. The protein is Glucose-6-phosphatase 3 (G6PC3) of Homo sapiens (Human).